The sequence spans 519 residues: Galactose-1-phosphate uridylyltransferase (519 aa).

Belongs to the galactose-1-phosphate uridylyltransferase type 2 family.

It localises to the cytoplasm. The enzyme catalyses alpha-D-galactose 1-phosphate + UDP-alpha-D-glucose = alpha-D-glucose 1-phosphate + UDP-alpha-D-galactose. Its pathway is carbohydrate metabolism; galactose metabolism. In Caldanaerobacter subterraneus subsp. tengcongensis (strain DSM 15242 / JCM 11007 / NBRC 100824 / MB4) (Thermoanaerobacter tengcongensis), this protein is Galactose-1-phosphate uridylyltransferase.